Here is a 204-residue protein sequence, read N- to C-terminus: 3-isopropylmalate dehydratase small subunit (204 aa).

Belongs to the LeuD family. LeuD type 1 subfamily. In terms of assembly, heterodimer of LeuC and LeuD.

The catalysed reaction is (2R,3S)-3-isopropylmalate = (2S)-2-isopropylmalate. It functions in the pathway amino-acid biosynthesis; L-leucine biosynthesis; L-leucine from 3-methyl-2-oxobutanoate: step 2/4. Functionally, catalyzes the isomerization between 2-isopropylmalate and 3-isopropylmalate, via the formation of 2-isopropylmaleate. In Ruthia magnifica subsp. Calyptogena magnifica, this protein is 3-isopropylmalate dehydratase small subunit.